Reading from the N-terminus, the 283-residue chain is Pantothenate synthetase (283 aa).

Residue 30–37 (MGNLHDGH) participates in ATP binding. Histidine 37 acts as the Proton donor in catalysis. Glutamine 61 serves as a coordination point for (R)-pantoate. Glutamine 61 provides a ligand contact to beta-alanine. 149 to 152 (GEKD) contacts ATP. Residue glutamine 155 participates in (R)-pantoate binding. 186-189 (LSSR) contributes to the ATP binding site.

The protein belongs to the pantothenate synthetase family. In terms of assembly, homodimer.

It localises to the cytoplasm. It carries out the reaction (R)-pantoate + beta-alanine + ATP = (R)-pantothenate + AMP + diphosphate + H(+). It functions in the pathway cofactor biosynthesis; (R)-pantothenate biosynthesis; (R)-pantothenate from (R)-pantoate and beta-alanine: step 1/1. Catalyzes the condensation of pantoate with beta-alanine in an ATP-dependent reaction via a pantoyl-adenylate intermediate. This chain is Pantothenate synthetase, found in Escherichia coli O157:H7.